A 473-amino-acid chain; its full sequence is Fumarate hydratase class II (473 aa).

Residues 104–106 (SGT), 128–131 (HPND), 138–140 (SSN), and threonine 186 each bind substrate. The active-site Proton donor/acceptor is the histidine 187. Residue serine 318 is part of the active site. Substrate-binding positions include serine 319 and 324–326 (KVN).

Belongs to the class-II fumarase/aspartase family. Fumarase subfamily. In terms of assembly, homotetramer.

The protein resides in the cytoplasm. It catalyses the reaction (S)-malate = fumarate + H2O. It participates in carbohydrate metabolism; tricarboxylic acid cycle; (S)-malate from fumarate: step 1/1. Involved in the TCA cycle. Catalyzes the stereospecific interconversion of fumarate to L-malate. The protein is Fumarate hydratase class II of Corynebacterium efficiens (strain DSM 44549 / YS-314 / AJ 12310 / JCM 11189 / NBRC 100395).